Reading from the N-terminus, the 184-residue chain is Large ribosomal subunit protein uL18 (184 aa).

It belongs to the universal ribosomal protein uL18 family. In terms of assembly, part of the 50S ribosomal subunit. Contacts the 5S and 23S rRNAs.

This is one of the proteins that bind and probably mediate the attachment of the 5S RNA into the large ribosomal subunit, where it forms part of the central protuberance. In Haloferax mediterranei (strain ATCC 33500 / DSM 1411 / JCM 8866 / NBRC 14739 / NCIMB 2177 / R-4) (Halobacterium mediterranei), this protein is Large ribosomal subunit protein uL18.